The chain runs to 486 residues: Keratin, type II cuticular Hb6 (486 aa).

The segment at 1-106 is head; the sequence is MTCGSYCGGR…PNAQCVKHEE (106 aa). Positions 106 to 417 constitute an IF rod domain; that stretch reads EKEQIKCLNS…RLLEGEEQRL (312 aa). The interval 107–141 is coil 1A; sequence KEQIKCLNSKFAAFIDKVRFLEQQNKLLETKWQFY. A linker 1 region spans residues 142–151; it reads QNRKCCESNM. Positions 152–252 are coil 1B; sequence EPLFEGYIEA…YDEETRILHS (101 aa). A Glycyl lysine isopeptide (Lys-Gly) (interchain with G-Cter in SUMO1) cross-link involves residue Lys212. The tract at residues 253-269 is linker 12; sequence HISDTSIVVKMDNSRDL. Residues 270–413 are coil 2; it reads NMDCVVAEIK…TTYRRLLEGE (144 aa). The segment at 414-486 is tail; the sequence is EQRLCEGVGS…GACSGGCKKC (73 aa).

The protein belongs to the intermediate filament family. Heterotetramer of two type I and two type II keratins.

This chain is Keratin, type II cuticular Hb6 (Krt86), found in Mus musculus (Mouse).